The sequence spans 361 residues: MSQNSLRLVEENSVDKTKALDAALSQIERAFGKGSIMRLGKNAPVIEIETVPTGSLSLDIALGVGGLPKGRIVEIYGPESSGKTTLALHTIAEAQKKGGICAFVDAEHALDPVYARKLGVDLENLLISQPDTGEQALEITDTLVRSGAIDVLVVDSVAALTPRAEIEGEMGDSLPGLQARLMSQALRKLTASISRSNCMVIFINQIRMKIGVMFGSPETTTGGNALKFYASVRLDIRRIGSIKERDEVVGNQTRVKVVKNKLAPPFKQVEFDIMYGAGVSKTGELVDLGVKAGVVEKSGAWFSYNSQRLGQGRENAKQYLKDNPEVAREIETTLRQNAGLIAEQFLEDGGPEDDAGDAAEM.

An ATP-binding site is contributed by 77-84 (GPESSGKT).

The protein belongs to the RecA family.

The protein localises to the cytoplasm. In terms of biological role, can catalyze the hydrolysis of ATP in the presence of single-stranded DNA, the ATP-dependent uptake of single-stranded DNA by duplex DNA, and the ATP-dependent hybridization of homologous single-stranded DNAs. It interacts with LexA causing its activation and leading to its autocatalytic cleavage. In Brucella anthropi (strain ATCC 49188 / DSM 6882 / CCUG 24695 / JCM 21032 / LMG 3331 / NBRC 15819 / NCTC 12168 / Alc 37) (Ochrobactrum anthropi), this protein is Protein RecA.